The primary structure comprises 399 residues: Subtilisin-like protease 4 (399 aa).

The N-terminal stretch at 1 to 19 (MVCLKTLSVFLAAFAAADA) is a signal peptide. Residues 20-118 (RAVFKTQGHK…VEQDQVVRIS (99 aa)) constitute a propeptide that is removed on maturation. The Inhibitor I9 domain maps to 38–117 (YIVVMKDGVS…YVEQDQVVRI (80 aa)). Residues 128–399 (SWGLGRVSHR…NRLLYNGSGQ (272 aa)) form the Peptidase S8 domain. Catalysis depends on charge relay system residues Asp-160 and His-191. Asn-252 and Asn-308 each carry an N-linked (GlcNAc...) asparagine glycan. Ser-346 functions as the Charge relay system in the catalytic mechanism. The N-linked (GlcNAc...) asparagine glycan is linked to Asn-395.

Belongs to the peptidase S8 family.

The protein resides in the secreted. In terms of biological role, secreted subtilisin-like serine protease with keratinolytic activity that contributes to pathogenicity. In Arthroderma benhamiae (strain ATCC MYA-4681 / CBS 112371) (Trichophyton mentagrophytes), this protein is Subtilisin-like protease 4 (SUB4).